The following is a 132-amino-acid chain: Small ribosomal subunit protein uS8 (132 aa).

Belongs to the universal ribosomal protein uS8 family. As to quaternary structure, part of the 30S ribosomal subunit. Contacts proteins S5 and S12.

One of the primary rRNA binding proteins, it binds directly to 16S rRNA central domain where it helps coordinate assembly of the platform of the 30S subunit. This Anaplasma marginale (strain Florida) protein is Small ribosomal subunit protein uS8.